The primary structure comprises 264 residues: Thymidylate synthase (264 aa).

Arginine 21 provides a ligand contact to dUMP. Histidine 51 provides a ligand contact to (6R)-5,10-methylene-5,6,7,8-tetrahydrofolate. Residue 126 to 127 participates in dUMP binding; that stretch reads RR. The active-site Nucleophile is cysteine 146. DUMP is bound by residues 166 to 169, asparagine 177, and 207 to 209; these read RSAD and HLY. Aspartate 169 contributes to the (6R)-5,10-methylene-5,6,7,8-tetrahydrofolate binding site. (6R)-5,10-methylene-5,6,7,8-tetrahydrofolate is bound at residue alanine 263.

This sequence belongs to the thymidylate synthase family. Bacterial-type ThyA subfamily. Homodimer.

It is found in the cytoplasm. It carries out the reaction dUMP + (6R)-5,10-methylene-5,6,7,8-tetrahydrofolate = 7,8-dihydrofolate + dTMP. The protein operates within pyrimidine metabolism; dTTP biosynthesis. Catalyzes the reductive methylation of 2'-deoxyuridine-5'-monophosphate (dUMP) to 2'-deoxythymidine-5'-monophosphate (dTMP) while utilizing 5,10-methylenetetrahydrofolate (mTHF) as the methyl donor and reductant in the reaction, yielding dihydrofolate (DHF) as a by-product. This enzymatic reaction provides an intracellular de novo source of dTMP, an essential precursor for DNA biosynthesis. In Paramagnetospirillum magneticum (strain ATCC 700264 / AMB-1) (Magnetospirillum magneticum), this protein is Thymidylate synthase.